The sequence spans 169 residues: Dihydrofolate reductase type 8 (169 aa).

The DHFR domain maps to 3–169; it reads ELHAILAATA…FTYRKKELTE (167 aa).

The protein belongs to the dihydrofolate reductase family. In terms of assembly, homodimer.

The enzyme catalyses (6S)-5,6,7,8-tetrahydrofolate + NADP(+) = 7,8-dihydrofolate + NADPH + H(+). It functions in the pathway cofactor biosynthesis; tetrahydrofolate biosynthesis; 5,6,7,8-tetrahydrofolate from 7,8-dihydrofolate: step 1/1. Functionally, key enzyme in folate metabolism. Catalyzes an essential reaction for de novo glycine and purine synthesis, and for DNA precursor synthesis. This chain is Dihydrofolate reductase type 8 (dhfrVIII), found in Escherichia coli.